Here is a 203-residue protein sequence, read N- to C-terminus: Peptidyl-tRNA hydrolase (203 aa).

Y16 serves as a coordination point for tRNA. Residue H21 is the Proton acceptor of the active site. TRNA is bound by residues Y68, N70, and N116.

It belongs to the PTH family. As to quaternary structure, monomer.

It is found in the cytoplasm. It carries out the reaction an N-acyl-L-alpha-aminoacyl-tRNA + H2O = an N-acyl-L-amino acid + a tRNA + H(+). Its function is as follows. Hydrolyzes ribosome-free peptidyl-tRNAs (with 1 or more amino acids incorporated), which drop off the ribosome during protein synthesis, or as a result of ribosome stalling. In terms of biological role, catalyzes the release of premature peptidyl moieties from peptidyl-tRNA molecules trapped in stalled 50S ribosomal subunits, and thus maintains levels of free tRNAs and 50S ribosomes. The chain is Peptidyl-tRNA hydrolase from Nostoc sp. (strain PCC 7120 / SAG 25.82 / UTEX 2576).